A 447-amino-acid chain; its full sequence is Phosphoglucosamine mutase (447 aa).

S102 acts as the Phosphoserine intermediate in catalysis. Mg(2+) is bound by residues S102, D241, D243, and D245. At S102 the chain carries Phosphoserine.

The protein belongs to the phosphohexose mutase family. The cofactor is Mg(2+). Activated by phosphorylation.

The catalysed reaction is alpha-D-glucosamine 1-phosphate = D-glucosamine 6-phosphate. Its function is as follows. Catalyzes the conversion of glucosamine-6-phosphate to glucosamine-1-phosphate. The polypeptide is Phosphoglucosamine mutase (Hamiltonella defensa subsp. Acyrthosiphon pisum (strain 5AT)).